Consider the following 867-residue polypeptide: 2-methylcitrate dehydratase (2-methyl-trans-aconitate forming) (867 aa).

Positions 410, 476, and 479 each coordinate [4Fe-4S] cluster.

Belongs to the aconitase/IPM isomerase family. The cofactor is [4Fe-4S] cluster.

The catalysed reaction is (2S,3S)-2-methylcitrate = 2-methyl-trans-aconitate + H2O. It catalyses the reaction citrate = D-threo-isocitrate. It participates in organic acid metabolism; propanoate degradation. Inhibited by ferricyanide and EDTA. Functionally, involved in the catabolism of short chain fatty acids (SCFA) via the 2-methylcitrate cycle II (propionate degradation route). In vivo under anaerobic conditions, AcnD catalyzes the stereospecific dehydration of (2S,3S)-methylcitrate (2-MC) to yield the trans isomer of 2-methyl-aconitate (2-MCA). AcnD can also accept citrate and cis-aconitate, but with a lower efficiency. 2-methylisocitrate and isocitrate are not substrates. This Shewanella oneidensis (strain ATCC 700550 / JCM 31522 / CIP 106686 / LMG 19005 / NCIMB 14063 / MR-1) protein is 2-methylcitrate dehydratase (2-methyl-trans-aconitate forming) (acnD).